Reading from the N-terminus, the 499-residue chain is WD repeat-containing protein 55 homolog (499 aa).

The disordered stretch occupies residues 1 to 130; that stretch reads MHTHNNFKTP…EATFDLDVDD (130 aa). 2 stretches are compositionally biased toward acidic residues: residues 12-23 and 31-48; these read DEDELDDLDEDM and IEQE…EYDL. The span at 91–103 shows a compositional bias: low complexity; the sequence is DDAGGASAGGATS. The segment covering 113-122 has biased composition (polar residues); that stretch reads PSGSNRQSEA. WD repeat units follow at residues 154-193, 198-237, 241-279, 282-321, 324-363, and 408-447; these read KLED…NKLL, VHSK…LKKL, AHDD…AIFE, ELED…MYVQ, PYEE…YHCD, and QHNM…DFGD. Residues 480–499 are disordered; sequence TKEDADDDDHDPSAGPSNMA.

The protein belongs to the WD repeat WDR55 family.

In Drosophila yakuba (Fruit fly), this protein is WD repeat-containing protein 55 homolog.